Reading from the N-terminus, the 278-residue chain is Glucosamine-6-phosphate deaminase (278 aa).

The active-site Proton acceptor; for enolization step is the aspartate 72. Aspartate 141 functions as the For ring-opening step in the catalytic mechanism. The active-site Proton acceptor; for ring-opening step is histidine 143. Glutamate 148 functions as the For ring-opening step in the catalytic mechanism.

The protein belongs to the glucosamine/galactosamine-6-phosphate isomerase family. In terms of assembly, homohexamer.

The protein localises to the cytoplasm. The catalysed reaction is alpha-D-glucosamine 6-phosphate + H2O = beta-D-fructose 6-phosphate + NH4(+). Its pathway is nucleotide-sugar biosynthesis; UDP-N-acetyl-alpha-D-glucosamine biosynthesis; alpha-D-glucosamine 6-phosphate from D-fructose 6-phosphate: step 1/1. Catalyzes the reversible conversion of alpha-D-glucosamine 6-phosphate (GlcN-6P) into beta-D-fructose 6-phosphate (Fru-6P) and ammonium ion, a regulatory reaction step in de novo uridine diphosphate-N-acetyl-alpha-D-glucosamine (UDP-GlcNAc) biosynthesis via hexosamine pathway. The chain is Glucosamine-6-phosphate deaminase (Gnpda1) from Aedes aegypti (Yellowfever mosquito).